The sequence spans 739 residues: Long-chain-fatty-acid--CoA ligase ACSBG2 (739 aa).

ATP contacts are provided by residues 287–295 (TSGTTGQPK), 478–483 (ELYGMS), aspartate 556, arginine 571, and lysine 684.

Belongs to the ATP-dependent AMP-binding enzyme family. Bubblegum subfamily.

The protein localises to the cytoplasm. The enzyme catalyses a long-chain fatty acid + ATP + CoA = a long-chain fatty acyl-CoA + AMP + diphosphate. It catalyses the reaction (5Z,8Z,11Z,14Z)-eicosatetraenoate + ATP + CoA = (5Z,8Z,11Z,14Z)-eicosatetraenoyl-CoA + AMP + diphosphate. The catalysed reaction is hexadecanoate + ATP + CoA = hexadecanoyl-CoA + AMP + diphosphate. It carries out the reaction (9Z)-octadecenoate + ATP + CoA = (9Z)-octadecenoyl-CoA + AMP + diphosphate. The enzyme catalyses (9Z,12Z)-octadecadienoate + ATP + CoA = (9Z,12Z)-octadecadienoyl-CoA + AMP + diphosphate. It catalyses the reaction tetracosanoate + ATP + CoA = tetracosanoyl-CoA + AMP + diphosphate. Catalyzes the conversion of fatty acids such as long chain and very long-chain fatty acids to their active form acyl-CoAs for both synthesis of cellular lipids, and degradation via beta-oxidation. Can activate diverse saturated, monosaturated and polyunsaturated fatty acids. In Xenopus laevis (African clawed frog), this protein is Long-chain-fatty-acid--CoA ligase ACSBG2.